Reading from the N-terminus, the 386-residue chain is Endonuclease III homolog 2, chloroplastic (386 aa).

The transit peptide at Met1–Glu50 directs the protein to the chloroplast. A disordered region spans residues Arg44–Lys66. In terms of domain architecture, HhH spans Tyr252–Leu278. Lys272 (nucleophile; for N-glycosylase activity) is an active-site residue. Residues Cys347, Cys354, Cys357, and Cys363 each coordinate [4Fe-4S] cluster.

This sequence belongs to the Nth/MutY family. [4Fe-4S] cluster is required as a cofactor.

The protein resides in the plastid. Its subcellular location is the chloroplast stroma. The protein localises to the chloroplast nucleoid. The enzyme catalyses 2'-deoxyribonucleotide-(2'-deoxyribose 5'-phosphate)-2'-deoxyribonucleotide-DNA = a 3'-end 2'-deoxyribonucleotide-(2,3-dehydro-2,3-deoxyribose 5'-phosphate)-DNA + a 5'-end 5'-phospho-2'-deoxyribonucleoside-DNA + H(+). In terms of biological role, bifunctional DNA N-glycosylase with associated apurinic/apyrimidinic (AP) lyase function that catalyzes the first step in base excision repair (BER), the primary repair pathway for the repair of oxidative DNA damage. The DNA N-glycosylase activity releases the damaged DNA base from DNA by cleaving the N-glycosidic bond, leaving an AP site. The AP lyase activity cleaves the phosphodiester bond 3' to the AP site by a beta-elimination. Primarily recognizes and repairs oxidative base damage of pyrimidines. This chain is Endonuclease III homolog 2, chloroplastic (NTH2), found in Arabidopsis thaliana (Mouse-ear cress).